A 257-amino-acid chain; its full sequence is Anamorsin homolog (257 aa).

The segment at 1–134 (MSDRKNVLFV…KVGSSDKVTL (134 aa)) is N-terminal SAM-like domain. The tract at residues 135–168 (NPEMKENVVSAWKLDDNNSETISEDDLLEADDLI) is linker. Residues Cys178, Cys187, Cys190, and Cys192 each contribute to the [2Fe-2S] cluster site. The interval 178-192 (CATTKKAKACKDCSC) is fe-S binding site A. Residues Cys218, Cys221, Cys229, and Cys232 each contribute to the [4Fe-4S] cluster site. Short sequence motifs (cx2C motif) lie at residues 218-221 (CGSC) and 229-232 (CASC). The fe-S binding site B stretch occupies residues 218–232 (CGSCYLGDAFRCASC).

Belongs to the anamorsin family. Monomer. It depends on [2Fe-2S] cluster as a cofactor. [4Fe-4S] cluster serves as cofactor.

The protein localises to the cytoplasm. It is found in the mitochondrion intermembrane space. Functionally, component of the cytosolic iron-sulfur (Fe-S) protein assembly (CIA) machinery. Required for the maturation of extramitochondrial Fe-S proteins. Part of an electron transfer chain functioning in an early step of cytosolic Fe-S biogenesis, facilitating the de novo assembly of a [4Fe-4S] cluster on the cytosolic Fe-S scaffold complex. Electrons are transferred from NADPH via a FAD- and FMN-containing diflavin oxidoreductase. Together with the diflavin oxidoreductase, also required for the assembly of the diferric tyrosyl radical cofactor of ribonucleotide reductase (RNR), probably by providing electrons for reduction during radical cofactor maturation in the catalytic small subunit. The polypeptide is Anamorsin homolog (Acyrthosiphon pisum (Pea aphid)).